Here is a 149-residue protein sequence, read N- to C-terminus: Oligosaccharyltransferase complex subunit ostc (149 aa).

Residues 1 to 32 lie on the Cytoplasmic side of the membrane; it reads MESLYRVPFTVLECPNLKLKKPSWLHMPSAMT. The chain crosses the membrane as a helical span at residues 33-53; it reads VYAMVVVSYFLITGGIIYDVI. Residues 54–83 lie on the Extracellular side of the membrane; that stretch reads VEPPSVGSMTDEHGHQRPVAFLAYRVNGQY. Residues 84-104 traverse the membrane as a helical segment; sequence IMEGLASSFLFTMGGLGFIIL. Residues 105 to 117 lie on the Cytoplasmic side of the membrane; that stretch reads DRSNAPNIPKLNR. The helical transmembrane segment at 118–138 threads the bilayer; sequence FLLLFIGFVCVLLSFFMARVF. Residues 139-149 lie on the Extracellular side of the membrane; sequence MRMKLPGYLMG.

Belongs to the OSTC family. In terms of assembly, specific component of the STT3A-containing form of the oligosaccharyltransferase (OST) complex.

The protein resides in the membrane. The protein operates within protein modification; protein glycosylation. Its function is as follows. Specific component of the STT3A-containing form of the oligosaccharyl transferase (OST) complex that catalyzes the initial transfer of a defined glycan (Glc(3)Man(9)GlcNAc(2) in eukaryotes) from the lipid carrier dolichol-pyrophosphate to an asparagine residue within an Asn-X-Ser/Thr consensus motif in nascent polypeptide chains, the first step in protein N-glycosylation. N-glycosylation occurs cotranslationally and the complex associates with the Sec61 complex at the channel-forming translocon complex that mediates protein translocation across the endoplasmic reticulum (ER). All subunits are required for a maximal enzyme activity. This is Oligosaccharyltransferase complex subunit ostc from Xenopus tropicalis (Western clawed frog).